Consider the following 300-residue polypeptide: GTPase Era (300 aa).

Positions 8–176 constitute an Era-type G domain; the sequence is RCGYVAIVGR…EGLIAKHLPE (169 aa). The interval 16-23 is G1; sequence GRPNVGKS. 16–23 is a GTP binding site; sequence GRPNVGKS. Residues 42–46 form a G2 region; the sequence is QTTRH. Residues 63–66 are G3; it reads DTPG. Residues 63 to 67 and 125 to 128 each bind GTP; these read DTPGM and NKTD. Positions 125–128 are G4; that stretch reads NKTD. Residues 155-157 are G5; that stretch reads VSA. In terms of domain architecture, KH type-2 spans 199–283; sequence VREKIMRQLG…MLNLWVKVKG (85 aa).

Belongs to the TRAFAC class TrmE-Era-EngA-EngB-Septin-like GTPase superfamily. Era GTPase family. As to quaternary structure, monomer.

Its subcellular location is the cytoplasm. It localises to the cell inner membrane. Functionally, an essential GTPase that binds both GDP and GTP, with rapid nucleotide exchange. Plays a role in 16S rRNA processing and 30S ribosomal subunit biogenesis and possibly also in cell cycle regulation and energy metabolism. The protein is GTPase Era of Pseudomonas fluorescens (strain ATCC BAA-477 / NRRL B-23932 / Pf-5).